Here is a 195-residue protein sequence, read N- to C-terminus: Probable serine/threonine-protein kinase BUD32 homolog (195 aa).

The Protein kinase domain occupies 1–195 (MKVYLGGEAE…GRYVERVSMG (195 aa)). An ATP-binding site is contributed by K12. D107 (proton acceptor) is an active-site residue.

Belongs to the protein kinase superfamily. Tyr protein kinase family. BUD32 subfamily.

It is found in the cytoplasm. It catalyses the reaction L-seryl-[protein] + ATP = O-phospho-L-seryl-[protein] + ADP + H(+). It carries out the reaction L-threonyl-[protein] + ATP = O-phospho-L-threonyl-[protein] + ADP + H(+). Could be involved in the formation of a threonylcarbamoyl group on adenosine at position 37 (t(6)A37) in tRNAs that read codons beginning with adenine. The chain is Probable serine/threonine-protein kinase BUD32 homolog from Archaeoglobus fulgidus (strain ATCC 49558 / DSM 4304 / JCM 9628 / NBRC 100126 / VC-16).